The primary structure comprises 433 residues: Putative tartrate transporter (433 aa).

Helical transmembrane passes span Ile-17–Phe-37, Gly-47–Phe-67, Ile-82–Gln-102, Leu-113–Phe-133, Ala-139–Ile-159, Trp-177–Leu-197, Val-242–Trp-262, Leu-275–Trp-295, Leu-314–Ile-334, Leu-350–Ile-370, and Phe-395–Val-415.

Belongs to the major facilitator superfamily. Phthalate permease family.

The protein localises to the cell membrane. In terms of biological role, component of the tartrate utilization system and may allow entry of tartrate and tartrate dehydrogenase. The chain is Putative tartrate transporter (ttuB) from Agrobacterium vitis (Rhizobium vitis).